Reading from the N-terminus, the 54-residue chain is UPF0391 membrane protein R00741 (54 aa).

2 helical membrane-spanning segments follow: residues 5 to 25 and 30 to 50; these read ALVF…GIAG and IAQV…VAGL.

It belongs to the UPF0391 family.

The protein localises to the cell membrane. This chain is UPF0391 membrane protein R00741, found in Rhizobium meliloti (strain 1021) (Ensifer meliloti).